Reading from the N-terminus, the 205-residue chain is Recombination protein RecR (205 aa).

The C4-type zinc-finger motif lies at 59-74 (CAMCNTFCEGGLCDIC). Residues 82-177 (RRLMVVHMPA…KVSRLSQGIP (96 aa)) enclose the Toprim domain.

The protein belongs to the RecR family.

May play a role in DNA repair. It seems to be involved in an RecBC-independent recombinational process of DNA repair. It may act with RecF and RecO. This Neisseria meningitidis serogroup C (strain 053442) protein is Recombination protein RecR.